The primary structure comprises 252 residues: MGPGWRAPSAALVGGSVALFGALRRAALALPRPAAVRSRPGRVWRWRNLLVSFAHSVLAGLWALFSLWQSPELLSDIQDGYSVSGHLLVCFSSGYFIHDSLDIIFNQQSRSSWEYLVHHAMAISAFVSLIITGRFLVAAMLLLLVEVSNIFLTIRMLLKMSNVPSPALYEANKYVNLVMYFAFRLAPQVYLTWYFVRYVEVQGQGAFLMANLLLLDAMILMYFSRLLRSDFFPSLRKGSVGRDVDGEKFLID.

The N-terminal stretch at 1 to 29 is a signal peptide; that stretch reads MGPGWRAPSAALVGGSVALFGALRRAALA. The Extracellular portion of the chain corresponds to 30–47; it reads LPRPAAVRSRPGRVWRWR. The TLC domain maps to 41–235; the sequence is GRVWRWRNLL…LLRSDFFPSL (195 aa). Residues 48 to 68 traverse the membrane as a helical segment; the sequence is NLLVSFAHSVLAGLWALFSLW. The Cytoplasmic portion of the chain corresponds to 69–84; the sequence is QSPELLSDIQDGYSVS. A helical membrane pass occupies residues 85–105; it reads GHLLVCFSSGYFIHDSLDIIF. At 106-124 the chain is on the extracellular side; that stretch reads NQQSRSSWEYLVHHAMAIS. An intramembrane region (helical) is located at residues 125–145; the sequence is AFVSLIITGRFLVAAMLLLLV. Residues 146 to 174 are Extracellular-facing; it reads EVSNIFLTIRMLLKMSNVPSPALYEANKY. The chain crosses the membrane as a helical span at residues 175 to 195; the sequence is VNLVMYFAFRLAPQVYLTWYF. The Cytoplasmic portion of the chain corresponds to 196–202; sequence VRYVEVQ. A helical membrane pass occupies residues 203 to 223; that stretch reads GQGAFLMANLLLLDAMILMYF. The Extracellular segment spans residues 224–252; the sequence is SRLLRSDFFPSLRKGSVGRDVDGEKFLID.

As to quaternary structure, interacts with CACNA1C in vitro; however the relevance of the interaction in vivo is unclear.

It localises to the cell membrane. In terms of biological role, regulates the composition and fluidity of the plasma membrane. Inhibits the incorporation of membrane-fluidizing phospholipids containing omega-3 long-chain polyunsaturated fatty acids (LCPUFA) and thereby promotes membrane rigidity. Does not appear to have any effect on LCPUFA synthesis. This chain is TLC domain-containing protein 1 (TLCD1), found in Gallus gallus (Chicken).